The primary structure comprises 352 residues: MSEQQTMSELKQQALVDINEANDERALQEVKVKYLGKKGSVSGLMKLMKDLPNEEKPAFGQKVNELRQTIQNELDERQQMLVKEKLNKQLAEETIDVSLPGRHIEIGSKHPLTRTIEEIEDLFLGLGYEIVNGYEVEQDHYNFEMLNLPKSHPARDMQDSFYITDEILLRTHTSPVQARTMESRHGQGPVKIICPGKVYRRDSDDATHSHQFTQIEGLVVDKNVKMSDLKGTLELLAKKLFGADREIRLRPSYFPFTEPSVEVDVSCFKCKGKGCNVCKHTGWIEILGAGMVHPNVLEMAGFDSSEYSGFAFGMGPDRIAMLKYGIEDIRHFYTNDVRFLDQFKAVEDRGDM.

Residue Glu258 participates in Mg(2+) binding.

Belongs to the class-II aminoacyl-tRNA synthetase family. Phe-tRNA synthetase alpha subunit type 1 subfamily. In terms of assembly, tetramer of two alpha and two beta subunits. The cofactor is Mg(2+).

The protein resides in the cytoplasm. The enzyme catalyses tRNA(Phe) + L-phenylalanine + ATP = L-phenylalanyl-tRNA(Phe) + AMP + diphosphate + H(+). This Staphylococcus aureus (strain Mu3 / ATCC 700698) protein is Phenylalanine--tRNA ligase alpha subunit.